The primary structure comprises 572 residues: Proline--tRNA ligase (572 aa).

This sequence belongs to the class-II aminoacyl-tRNA synthetase family. ProS type 1 subfamily. In terms of assembly, homodimer.

Its subcellular location is the cytoplasm. The enzyme catalyses tRNA(Pro) + L-proline + ATP = L-prolyl-tRNA(Pro) + AMP + diphosphate. Catalyzes the attachment of proline to tRNA(Pro) in a two-step reaction: proline is first activated by ATP to form Pro-AMP and then transferred to the acceptor end of tRNA(Pro). As ProRS can inadvertently accommodate and process non-cognate amino acids such as alanine and cysteine, to avoid such errors it has two additional distinct editing activities against alanine. One activity is designated as 'pretransfer' editing and involves the tRNA(Pro)-independent hydrolysis of activated Ala-AMP. The other activity is designated 'posttransfer' editing and involves deacylation of mischarged Ala-tRNA(Pro). The misacylated Cys-tRNA(Pro) is not edited by ProRS. The protein is Proline--tRNA ligase of Pectobacterium carotovorum subsp. carotovorum (strain PC1).